The chain runs to 297 residues: Homoserine kinase (297 aa).

82–92 (PLTRGLGSSAS) serves as a coordination point for ATP.

This sequence belongs to the GHMP kinase family. Homoserine kinase subfamily.

Its subcellular location is the cytoplasm. It catalyses the reaction L-homoserine + ATP = O-phospho-L-homoserine + ADP + H(+). It participates in amino-acid biosynthesis; L-threonine biosynthesis; L-threonine from L-aspartate: step 4/5. In terms of biological role, catalyzes the ATP-dependent phosphorylation of L-homoserine to L-homoserine phosphate. The sequence is that of Homoserine kinase from Bacillus mycoides (strain KBAB4) (Bacillus weihenstephanensis).